The sequence spans 241 residues: Small ribosomal subunit protein uS5 (241 aa).

Residues 1 to 53 (MSDNEKETQVAEETQNTQAAAESNNEDRKSRRGQRGEGRRGERRNRREESHEN) are disordered. Positions 11 to 22 (AEETQNTQAAAE) are enriched in low complexity. The segment covering 25-53 (NEDRKSRRGQRGEGRRGERRNRREESHEN) has biased composition (basic and acidic residues). Residues 55-118 (MLDRVVTINR…LDAKKHMFTV (64 aa)) form the S5 DRBM domain.

Belongs to the universal ribosomal protein uS5 family. As to quaternary structure, part of the 30S ribosomal subunit. Contacts proteins S4 and S8.

With S4 and S12 plays an important role in translational accuracy. In terms of biological role, located at the back of the 30S subunit body where it stabilizes the conformation of the head with respect to the body. The protein is Small ribosomal subunit protein uS5 of Bifidobacterium adolescentis (strain ATCC 15703 / DSM 20083 / NCTC 11814 / E194a).